A 199-amino-acid chain; its full sequence is Recombination protein RecR (199 aa).

Residues 57–72 (CQSCRTYTEETLCPIC) form a C4-type zinc finger. A Toprim domain is found at 81-176 (STICVVETPA…MISRIAHGVP (96 aa)).

It belongs to the RecR family.

Its function is as follows. May play a role in DNA repair. It seems to be involved in an RecBC-independent recombinational process of DNA repair. It may act with RecF and RecO. In Shewanella baltica (strain OS195), this protein is Recombination protein RecR.